Here is a 1294-residue protein sequence, read N- to C-terminus: ATPase PglY (1294 aa).

Positions 1205-1263 are disordered; sequence TQAAATPPPAPAASQPTAGDLSLDTPTSDPRIPYTSQETPTSSGGAGTARTSGGRRTTA. Polar residues predominate over residues 1228–1244; that stretch reads DTPTSDPRIPYTSQETP. The segment covering 1252 to 1263 has biased composition (low complexity); the sequence is TARTSGGRRTTA.

Its function is as follows. BREX systems (bacteriophage exclusion) provide immunity against bacteriophage. Part of a type 2 BREX system. Previously called the phage growth limitation (Pgl) system, it confers protection against bacteriophage phiC31. The bacteria allows one cycle of phage infection, but subsequent cycles are impaired, protecting the original bacterial colony. The system undergoes high rates (10(-3) to 10(-4)) of phase reversion, i.e. loss and regain of phiC31 resistance. When the pglW-pglX-pglY-pglZ genes are transformed into a susceptible S.lividans (strain 1326) they confer resistance to infection by phage phiC31 and phiBT1; all 4 genes are necessary. Functionally, hydrolyzes ATP but not AMP, ADP, GMP, GDP or GTP; activity is inhibited by the non-hydrolyzable ATP analog 5-adenylyl beta,gamma-imidodiphosphate. This Streptomyces coelicolor (strain ATCC BAA-471 / A3(2) / M145) protein is ATPase PglY.